The primary structure comprises 401 residues: Acetate kinase (401 aa).

Asn-7 is a Mg(2+) binding site. Lys-14 is a binding site for ATP. Position 92 (Arg-92) interacts with substrate. Asp-149 serves as the catalytic Proton donor/acceptor. ATP is bound by residues 209–213, 283–285, and 331–335; these read HLGNG, DAR, and GLGEN. Glu-385 contacts Mg(2+).

Belongs to the acetokinase family. Homodimer. The cofactor is Mg(2+). Requires Mn(2+) as cofactor.

Its subcellular location is the cytoplasm. It catalyses the reaction acetate + ATP = acetyl phosphate + ADP. It participates in metabolic intermediate biosynthesis; acetyl-CoA biosynthesis; acetyl-CoA from acetate: step 1/2. Functionally, catalyzes the formation of acetyl phosphate from acetate and ATP. Can also catalyze the reverse reaction. This chain is Acetate kinase, found in Helicobacter pylori (strain Shi470).